A 328-amino-acid polypeptide reads, in one-letter code: Ribosomal RNA small subunit methyltransferase H (328 aa).

S-adenosyl-L-methionine contacts are provided by residues 35–37, Asp-60, Phe-87, Asp-113, and Gln-120; that span reads GSH.

Belongs to the methyltransferase superfamily. RsmH family.

The protein resides in the cytoplasm. It carries out the reaction cytidine(1402) in 16S rRNA + S-adenosyl-L-methionine = N(4)-methylcytidine(1402) in 16S rRNA + S-adenosyl-L-homocysteine + H(+). Its function is as follows. Specifically methylates the N4 position of cytidine in position 1402 (C1402) of 16S rRNA. The chain is Ribosomal RNA small subunit methyltransferase H from Chlorobium chlorochromatii (strain CaD3).